The sequence spans 39 residues: Non-specific lipid-transfer protein (39 aa).

The protein belongs to the plant LTP family.

Plant non-specific lipid-transfer proteins transfer phospholipids as well as galactolipids across membranes. May play a role in wax or cutin deposition in the cell walls of expanding epidermal cells and certain secretory tissues. This Musa acuminata (Banana) protein is Non-specific lipid-transfer protein.